The chain runs to 193 residues: Ion-translocating oxidoreductase complex subunit A (193 aa).

6 helical membrane passes run 4-24, 39-59, 63-83, 102-122, 134-154, and 171-191; these read FLLL…QFLG, IGMS…SYLV, ILLP…VIAV, LLGI…VALL, VIYG…FAAM, and SISM…TGLV.

Belongs to the NqrDE/RnfAE family. In terms of assembly, the complex is composed of six subunits: RnfA, RnfB, RnfC, RnfD, RnfE and RnfG.

The protein resides in the cell inner membrane. Functionally, part of a membrane-bound complex that couples electron transfer with translocation of ions across the membrane. The chain is Ion-translocating oxidoreductase complex subunit A from Pseudoalteromonas atlantica (strain T6c / ATCC BAA-1087).